Reading from the N-terminus, the 76-residue chain is Large ribosomal subunit protein uL24 (76 aa).

Belongs to the universal ribosomal protein uL24 family. Part of the 50S ribosomal subunit.

One of two assembly initiator proteins, it binds directly to the 5'-end of the 23S rRNA, where it nucleates assembly of the 50S subunit. Functionally, one of the proteins that surrounds the polypeptide exit tunnel on the outside of the subunit. This chain is Large ribosomal subunit protein uL24, found in Campylobacter hominis (strain ATCC BAA-381 / DSM 21671 / CCUG 45161 / LMG 19568 / NCTC 13146 / CH001A).